The sequence spans 435 residues: Chaperone SurA (435 aa).

An N-terminal signal peptide occupies residues 1–24 (MRLRSFAFLGFMLLVAMAPSMASA). 2 consecutive PpiC domains span residues 173-274 (DTAY…KLID) and 286-385 (VTEN…ELED).

Its subcellular location is the periplasm. It catalyses the reaction [protein]-peptidylproline (omega=180) = [protein]-peptidylproline (omega=0). In terms of biological role, chaperone involved in the correct folding and assembly of outer membrane proteins. Recognizes specific patterns of aromatic residues and the orientation of their side chains, which are found more frequently in integral outer membrane proteins. May act in both early periplasmic and late outer membrane-associated steps of protein maturation. This chain is Chaperone SurA, found in Chromohalobacter salexigens (strain ATCC BAA-138 / DSM 3043 / CIP 106854 / NCIMB 13768 / 1H11).